Here is a 169-residue protein sequence, read N- to C-terminus: Putative pre-16S rRNA nuclease (169 aa).

Basic and acidic residues predominate over residues 1–19 (MTDSDHRLPDRPGEGDPGR). Residues 1-24 (MTDSDHRLPDRPGEGDPGRGRRIG) form a disordered region.

Belongs to the YqgF nuclease family.

It is found in the cytoplasm. Could be a nuclease involved in processing of the 5'-end of pre-16S rRNA. This Mycobacterium sp. (strain KMS) protein is Putative pre-16S rRNA nuclease.